Consider the following 353-residue polypeptide: MADNQIPSSVADAVLVKSIEMPEGSQKVEELDFNKFKGRPITVDDLLQGMKHMGFQASSMCEAVRIINEMRAYRDPTTSEKTTIFLGYTSNLISSGLRGTLRYLVQHKHVSAIVTTAGGIEEDFIKCLGDTYMSSFSAVGADLRSKGLNRIGNLVVPNSNYCAFEDWVVPILDKMLEEQEASRGTENEINWTPSKVIHRLGKEINDERSVYYWAWKNDIPVFCPALTDGSLGDMLYFHTFKASPKQLRIDIVEDIRKINTIAVRAKRAGMIILGGGIVKHHIANACLMRNGAESAVYINTAQEFDGSDAGARPDEAVSWGKIKVGADAVKVYMEATAAFPFIVANTFAKEDGL.

Residues 90-94 (SNLIS), 116-118 (TAG), E122, and D228 contribute to the NAD(+) site. 121-122 (EE) is a spermidine binding site. A spermidine-binding site is contributed by D233. G275 contributes to the NAD(+) binding site. H280 is a binding site for spermidine. Position 300-301 (300-301 (TA)) interacts with NAD(+). Spermidine is bound by residues 306 to 308 (GSD) and 315 to 321 (EAVSWGK). K321 acts as the Nucleophile in catalysis. Residue 334–335 (EA) coordinates NAD(+).

The protein belongs to the deoxyhypusine synthase family. Homotetramer. Requires NAD(+) as cofactor.

The enzyme catalyses [eIF5A protein]-L-lysine + spermidine = [eIF5A protein]-deoxyhypusine + propane-1,3-diamine. Its pathway is protein modification; eIF5A hypusination. In terms of biological role, catalyzes the NAD-dependent oxidative cleavage of spermidine and the subsequent transfer of the butylamine moiety of spermidine to the epsilon-amino group of a specific lysine residue of the eIF-5A precursor protein to form the intermediate deoxyhypusine residue. This chain is Deoxyhypusine synthase (dys-1), found in Neurospora crassa (strain ATCC 24698 / 74-OR23-1A / CBS 708.71 / DSM 1257 / FGSC 987).